The primary structure comprises 53 residues: Large ribosomal subunit protein bL33 (53 aa).

This sequence belongs to the bacterial ribosomal protein bL33 family.

The protein is Large ribosomal subunit protein bL33 of Blochmanniella floridana.